A 491-amino-acid polypeptide reads, in one-letter code: Ketol-acid reductoisomerase (NADP(+)) (491 aa).

One can recognise a KARI N-terminal Rossmann domain in the interval 15–208; the sequence is AQLGKCRFMA…GGHRAGVLES (194 aa). NADP(+) contacts are provided by residues 45–48, R68, R76, S78, and 108–110; these read CGAQ and DKQ. H132 is an active-site residue. An NADP(+)-binding site is contributed by G158. KARI C-terminal knotted domains are found at residues 209-344 and 345-484; these read SFVA…TASQ and FDGK…MKDM. Positions 217, 221, 389, and 393 each coordinate Mg(2+). S414 serves as a coordination point for substrate.

This sequence belongs to the ketol-acid reductoisomerase family. Mg(2+) serves as cofactor.

The enzyme catalyses (2R)-2,3-dihydroxy-3-methylbutanoate + NADP(+) = (2S)-2-acetolactate + NADPH + H(+). The catalysed reaction is (2R,3R)-2,3-dihydroxy-3-methylpentanoate + NADP(+) = (S)-2-ethyl-2-hydroxy-3-oxobutanoate + NADPH + H(+). It functions in the pathway amino-acid biosynthesis; L-isoleucine biosynthesis; L-isoleucine from 2-oxobutanoate: step 2/4. Its pathway is amino-acid biosynthesis; L-valine biosynthesis; L-valine from pyruvate: step 2/4. Its function is as follows. Involved in the biosynthesis of branched-chain amino acids (BCAA). Catalyzes an alkyl-migration followed by a ketol-acid reduction of (S)-2-acetolactate (S2AL) to yield (R)-2,3-dihydroxy-isovalerate. In the isomerase reaction, S2AL is rearranged via a Mg-dependent methyl migration to produce 3-hydroxy-3-methyl-2-ketobutyrate (HMKB). In the reductase reaction, this 2-ketoacid undergoes a metal-dependent reduction by NADPH to yield (R)-2,3-dihydroxy-isovalerate. In Enterobacter sp. (strain 638), this protein is Ketol-acid reductoisomerase (NADP(+)).